The following is a 661-amino-acid chain: WD repeat-containing protein 26 (661 aa).

The segment covering 1-27 (MQANGAGGGGGGGGGGGGGGGGGGGQG) has biased composition (gly residues). 2 disordered regions span residues 1 to 70 (MQAN…ASNN) and 99 to 118 (TAAS…KKKK). Composition is skewed to low complexity over residues 56 to 70 (ANGL…ASNN) and 99 to 113 (TAAS…LGSS). 2 positions are modified to phosphoserine: Ser121 and Ser123. One can recognise a LisH domain in the interval 123 to 155 (SDEDVIRLIGQHLNGLGLNQTVDLLMQESGCRL). The CTLH domain occupies 156–231 (EHPSATKFRN…EYLEDGKVLE (76 aa)). WD repeat units lie at residues 353-392 (EHCN…HLLK), 399-438 (GHAY…GELR), 444-484 (SHED…DSWE), 524-563 (QEDH…LVRK), 566-608 (GVTQ…PIAE), and 611-651 (GHTR…DHQN).

Forms homooligomers. Identified in the CTLH complex that contains GID4, RANBP9 and/or RANBP10, MKLN1, MAEA, RMND5A (or alternatively its paralog RMND5B), GID8, ARMC8, WDR26 and YPEL5. Within this complex, MAEA, RMND5A (or alternatively its paralog RMND5B), GID8, WDR26, and RANBP9 and/or RANBP10 form the catalytic core, while GID4, MKLN1, ARMC8 and YPEL5 have ancillary roles. Interacts with DDB1-CUL4A/B E3 ligase complexes. Forms a complex composed of at least WDR26, a G-beta:gamma unit, and PLCB2. Interacts with AXIN1. Broadly expressed, with highest levels in heart and skeletal muscle.

Its subcellular location is the cytoplasm. The protein resides in the nucleus. It is found in the mitochondrion. G-beta-like protein involved in cell signal transduction. Acts as a negative regulator in MAPK signaling pathway. Functions as a scaffolding protein to promote G beta:gamma-mediated PLCB2 plasma membrane translocation and subsequent activation in leukocytes. Core component of the CTLH E3 ubiquitin-protein ligase complex that selectively accepts ubiquitin from UBE2H and mediates ubiquitination and subsequent proteasomal degradation of the transcription factor HBP1. Acts as a negative regulator of the canonical Wnt signaling pathway through preventing ubiquitination of beta-catenin CTNNB1 by the beta-catenin destruction complex, thus negatively regulating CTNNB1 degradation. Serves as a scaffold to coordinate PI3K/AKT pathway-driven cell growth and migration. Protects cells from oxidative stress-induced apoptosis via the down-regulation of AP-1 transcriptional activity as well as by inhibiting cytochrome c release from mitochondria. Also protects cells by promoting hypoxia-mediated autophagy and mitophagy. In Homo sapiens (Human), this protein is WD repeat-containing protein 26 (WDR26).